Here is a 132-residue protein sequence, read N- to C-terminus: Global transcriptional regulator Spx (132 aa).

A disulfide bond links Cys10 and Cys13.

This sequence belongs to the ArsC family. Spx subfamily. In terms of assembly, interacts with the C-terminal domain of the alpha subunit of the RNAP.

The protein resides in the cytoplasm. Global transcriptional regulator that plays a key role in stress response and exerts either positive or negative regulation of genes. Acts by interacting with the C-terminal domain of the alpha subunit of the RNA polymerase (RNAP). This interaction can enhance binding of RNAP to the promoter region of target genes and stimulate their transcription, or block interaction of RNAP with activator. The protein is Global transcriptional regulator Spx of Enterococcus faecalis (strain ATCC 700802 / V583).